The following is a 132-amino-acid chain: MARKEFRYRGYTLEQLMNMSLEELARLFPARQRRSLKRGLTPEQKKLLRKIRLAKKGKYKKPIRTHCRDMIILPEMVGLTIYVHNGKEFVPVEIKPEMIGHYLGEFAPTRKKVEHGAPGVGATRSSMFVAVK.

It belongs to the universal ribosomal protein uS19 family. In terms of assembly, part of the 30S ribosomal subunit.

Its function is as follows. Protein S19 forms a complex with S13 that binds strongly to the 16S ribosomal RNA. In Pyrococcus furiosus (strain ATCC 43587 / DSM 3638 / JCM 8422 / Vc1), this protein is Small ribosomal subunit protein uS19.